Here is a 496-residue protein sequence, read N- to C-terminus: Glycerol kinase (496 aa).

Residue Thr12 participates in ADP binding. Residues Thr12, Thr13, and Ser14 each contribute to the ATP site. Residue Thr12 coordinates sn-glycerol 3-phosphate. Residue Arg16 participates in ADP binding. Positions 82, 83, and 134 each coordinate sn-glycerol 3-phosphate. Residues Arg82, Glu83, and Tyr134 each contribute to the glycerol site. His230 carries the post-translational modification Phosphohistidine; by HPr. Residue Asp244 coordinates sn-glycerol 3-phosphate. Residues Asp244 and Gln245 each contribute to the glycerol site. 2 residues coordinate ADP: Thr266 and Gly309. Thr266, Gly309, Gln313, and Gly410 together coordinate ATP. Gly410 and Asn414 together coordinate ADP.

This sequence belongs to the FGGY kinase family. In terms of assembly, homotetramer and homodimer (in equilibrium). The phosphoenolpyruvate-dependent sugar phosphotransferase system (PTS), including enzyme I, and histidine-containing protein (HPr) are required for the phosphorylation, which leads to the activation of the enzyme.

It catalyses the reaction glycerol + ATP = sn-glycerol 3-phosphate + ADP + H(+). The protein operates within polyol metabolism; glycerol degradation via glycerol kinase pathway; sn-glycerol 3-phosphate from glycerol: step 1/1. Its activity is regulated as follows. Activated by phosphorylation and inhibited by fructose 1,6-bisphosphate (FBP). Key enzyme in the regulation of glycerol uptake and metabolism. Catalyzes the phosphorylation of glycerol to yield sn-glycerol 3-phosphate. This Bacillus thuringiensis subsp. konkukian (strain 97-27) protein is Glycerol kinase.